We begin with the raw amino-acid sequence, 93 residues long: Small ribosomal subunit protein uS19 (93 aa).

It belongs to the universal ribosomal protein uS19 family.

Protein S19 forms a complex with S13 that binds strongly to the 16S ribosomal RNA. In Parafrankia sp. (strain EAN1pec), this protein is Small ribosomal subunit protein uS19.